The primary structure comprises 225 residues: Putative amino-acid transporter YggA (225 aa).

5 helical membrane passes run 1 to 21 (MFAT…PIGA), 37 to 57 (LLTA…GVFG), 65 to 85 (SPIG…WFGI), 116 to 136 (LGVT…LGSF), and 150 to 170 (AVAM…AVVL).

The protein belongs to the LysE/ArgO transporter (TC 2.A.75) family.

It is found in the cell membrane. This chain is Putative amino-acid transporter YggA, found in Aeromonas hydrophila.